Consider the following 28-residue polypeptide: Morintide mO6 (28 aa).

A Chitin-binding type-1 domain is found at 1-28 (NGLCCSQYGFCGTTSAYCSRANGCQSNC). 2 cysteine pairs are disulfide-bonded: cysteine 4–cysteine 18 and cysteine 24–cysteine 28.

Seeds (at protein level).

Its function is as follows. Chitin-binding protein which functions in defense against chitin-containing fungal pathogens. In Moringa oleifera (Horseradish tree), this protein is Morintide mO6.